The following is a 169-amino-acid chain: Lipoprotein signal peptidase (169 aa).

3 helical membrane passes run 1 to 21 (MPES…LILV), 68 to 88 (WQRW…VVWL), and 94 to 114 (HETL…GNLY). Active-site residues include Asp-124 and Asp-143. A helical membrane pass occupies residues 135–155 (FFPAFNLADTFITIGAILLAL).

This sequence belongs to the peptidase A8 family.

It is found in the cell inner membrane. It carries out the reaction Release of signal peptides from bacterial membrane prolipoproteins. Hydrolyzes -Xaa-Yaa-Zaa-|-(S,diacylglyceryl)Cys-, in which Xaa is hydrophobic (preferably Leu), and Yaa (Ala or Ser) and Zaa (Gly or Ala) have small, neutral side chains.. It functions in the pathway protein modification; lipoprotein biosynthesis (signal peptide cleavage). Functionally, this protein specifically catalyzes the removal of signal peptides from prolipoproteins. The sequence is that of Lipoprotein signal peptidase from Ectopseudomonas mendocina (strain ymp) (Pseudomonas mendocina).